A 130-amino-acid chain; its full sequence is Astrocytic phosphoprotein PEA-15 (130 aa).

The 79-residue stretch at 3-81 (EYGTLLQDLT…RPDLLTMVVD (79 aa)) folds into the DED domain. A phosphoserine mark is found at Ser-61, Ser-90, Ser-104, and Ser-116. The tract at residues 98 to 107 (KLTRIPSAKK) is microtubule-binding. A microtubule-binding region spans residues 122-129 (KLAPPPKK).

Binds RPS6KA3, MAPK3 and MAPK1. Transient interaction with PLD1 and PLD2. Interacts with CASP8 and FADD. Phosphorylated by protein kinase C and calcium-calmodulin-dependent protein kinase. These phosphorylation events are modulated by neurotransmitters or hormones. As to expression, ubiquitously expressed. Most abundant in tissues such as heart, brain, muscle and adipose tissue which utilize glucose as an energy source. Lower expression in glucose-producing tissues. Higher levels of expression are found in tissues from individuals with type 2 diabetes than in controls.

It is found in the cytoplasm. Functionally, blocks Ras-mediated inhibition of integrin activation and modulates the ERK MAP kinase cascade. Inhibits RPS6KA3 activities by retaining it in the cytoplasm. Inhibits both TNFRSF6- and TNFRSF1A-mediated CASP8 activity and apoptosis. Regulates glucose transport by controlling both the content of SLC2A1 glucose transporters on the plasma membrane and the insulin-dependent trafficking of SLC2A4 from the cell interior to the surface. The chain is Astrocytic phosphoprotein PEA-15 (PEA15) from Homo sapiens (Human).